Here is a 550-residue protein sequence, read N- to C-terminus: Chaperonin GroEL (550 aa).

Residues threonine 30–proline 33, lysine 51, aspartate 87–threonine 91, glycine 415, asparagine 479–alanine 481, and aspartate 495 contribute to the ATP site.

It belongs to the chaperonin (HSP60) family. As to quaternary structure, forms a cylinder of 14 subunits composed of two heptameric rings stacked back-to-back. Interacts with the co-chaperonin GroES.

Its subcellular location is the cytoplasm. The enzyme catalyses ATP + H2O + a folded polypeptide = ADP + phosphate + an unfolded polypeptide.. Together with its co-chaperonin GroES, plays an essential role in assisting protein folding. The GroEL-GroES system forms a nano-cage that allows encapsulation of the non-native substrate proteins and provides a physical environment optimized to promote and accelerate protein folding. In Marinobacter nauticus (strain ATCC 700491 / DSM 11845 / VT8) (Marinobacter aquaeolei), this protein is Chaperonin GroEL.